The sequence spans 347 residues: MSETSIQPLLDILFQGKALTREQTASLFSVLIQGEMNETVMAGMLMALKIRGETIEEISGAADAMRAAAKPFPYPESSRSQGVIDIVGTGGDGFNTINISTTAAFVAAAAGAKVAKHGNRSVSSKSGSSDLLAQFGIDLTMSPELASHCLEALNLCFLFAPHYHGGVKHAVPVRQTLKTRTLFNVLGPLINPARPEFMLLGVYSAELVTPIARVLQALGTQRAMVVHGSGLDEVALHGSTQVAELKDGEIIEYQLTPADFGVPQAHISELEGGEPAHNALITQQILQGHGCDAHTHAVAINAGCALYLCGLSESVKMGTALALSTIKTGKAYELLHKLATVSSQSQE.

5-phospho-alpha-D-ribose 1-diphosphate is bound by residues G88, G91 to D92, T96, N98 to T101, K116 to S124, and S128. Residue G88 participates in anthranilate binding. Position 100 (S100) interacts with Mg(2+). An anthranilate-binding site is contributed by N119. R174 is a binding site for anthranilate. Residues D232 and E233 each contribute to the Mg(2+) site.

The protein belongs to the anthranilate phosphoribosyltransferase family. In terms of assembly, homodimer. Mg(2+) is required as a cofactor.

The catalysed reaction is N-(5-phospho-beta-D-ribosyl)anthranilate + diphosphate = 5-phospho-alpha-D-ribose 1-diphosphate + anthranilate. It functions in the pathway amino-acid biosynthesis; L-tryptophan biosynthesis; L-tryptophan from chorismate: step 2/5. In terms of biological role, catalyzes the transfer of the phosphoribosyl group of 5-phosphorylribose-1-pyrophosphate (PRPP) to anthranilate to yield N-(5'-phosphoribosyl)-anthranilate (PRA). In Shewanella oneidensis (strain ATCC 700550 / JCM 31522 / CIP 106686 / LMG 19005 / NCIMB 14063 / MR-1), this protein is Anthranilate phosphoribosyltransferase.